Here is a 397-residue protein sequence, read N- to C-terminus: Elongation factor Tu (397 aa).

The tr-type G domain occupies 10–206 (KPHVNIGTIG…AVDASIPEPE (197 aa)). Residues 19–26 (GHIDHGKT) form a G1 region. 19–26 (GHIDHGKT) provides a ligand contact to GTP. Thr-26 provides a ligand contact to Mg(2+). The segment at 62–66 (GITIS) is G2. The G3 stretch occupies residues 83–86 (DCPG). Residues 83-87 (DCPGH) and 138-141 (NKAD) each bind GTP. Residues 138–141 (NKAD) form a G4 region. Residues 176–178 (SAL) form a G5 region.

It belongs to the TRAFAC class translation factor GTPase superfamily. Classic translation factor GTPase family. EF-Tu/EF-1A subfamily. In terms of assembly, monomer.

The protein resides in the cytoplasm. It catalyses the reaction GTP + H2O = GDP + phosphate + H(+). GTP hydrolase that promotes the GTP-dependent binding of aminoacyl-tRNA to the A-site of ribosomes during protein biosynthesis. The polypeptide is Elongation factor Tu (Parafrankia sp. (strain EAN1pec)).